We begin with the raw amino-acid sequence, 74 residues long: Small ribosomal subunit protein bS18 (74 aa).

This sequence belongs to the bacterial ribosomal protein bS18 family. Part of the 30S ribosomal subunit. Forms a tight heterodimer with protein bS6.

In terms of biological role, binds as a heterodimer with protein bS6 to the central domain of the 16S rRNA, where it helps stabilize the platform of the 30S subunit. The polypeptide is Small ribosomal subunit protein bS18 (Coprothermobacter proteolyticus (strain ATCC 35245 / DSM 5265 / OCM 4 / BT)).